Reading from the N-terminus, the 262-residue chain is Hemin import ATP-binding protein HmuV (262 aa).

One can recognise an ABC transporter domain in the interval 1–247 (MRNLTLQRGR…ERIKQIFAFD (247 aa)). 31-38 (GPNGTGKS) contacts ATP.

This sequence belongs to the ABC transporter superfamily. Heme (hemin) importer (TC 3.A.1.14.5) family. In terms of assembly, the complex is composed of two ATP-binding proteins (HmuV), two transmembrane proteins (HmuU) and a solute-binding protein (HmuT).

The protein localises to the cell inner membrane. Its function is as follows. Part of the ABC transporter complex HmuTUV involved in hemin import. Responsible for energy coupling to the transport system. This Plesiomonas shigelloides (Aeromonas shigelloides) protein is Hemin import ATP-binding protein HmuV.